The following is a 39-amino-acid chain: Protein disulfide-isomerase A3 (39 aa).

This sequence belongs to the protein disulfide isomerase family. As to quaternary structure, part of the major histocompatibility complex class I (MHC I) peptide loading complex composed of TAP1, TAP2, B2M, MHC heavy chain, TAPBP, PDIA3, and CALR. Interacts with ERP27 and CANX. Interacts with SERPINA2 and with SERPINA1. Interacts with ATP2A2. In terms of processing, within the major histocompatibility complex class I (MHC I) peptide loading complex forms reversible disulfide-linked heterodimers with TAPBP as part of its protein folding chaperone activity. This is essential to assist the dynamic assembly of the MHC I complex with high affinity antigens in the endoplasmic reticulum. Phosphorylated. As to expression, predominantly expressed in liver. Low in brain, testis and colon. Not detectable in pancreas and skeletal muscle.

It is found in the endoplasmic reticulum. Its subcellular location is the endoplasmic reticulum lumen. It localises to the melanosome. The catalysed reaction is Catalyzes the rearrangement of -S-S- bonds in proteins.. Protein disulfide isomerase that catalyzes the formation, isomerization, and reduction or oxidation of disulfide bonds in client proteins and functions as a protein folding chaperone. Core component of the major histocompatibility complex class I (MHC I) peptide loading complex where it functions as an essential folding chaperone for TAPBP. Through TAPBP, assists the dynamic assembly of the MHC I complex with high affinity antigens in the endoplasmic reticulum. Therefore, plays a crucial role in the presentation of antigens to cytotoxic T cells in adaptive immunity. This Papio hamadryas (Hamadryas baboon) protein is Protein disulfide-isomerase A3 (PDIA3).